Here is a 74-residue protein sequence, read N- to C-terminus: Translation initiation factor IF-1 (74 aa).

The 73-residue stretch at 1–73 folds into the S1-like domain; it reads MAKKDDIIEF…TKGRITYRGK (73 aa).

It belongs to the IF-1 family. As to quaternary structure, component of the 30S ribosomal translation pre-initiation complex which assembles on the 30S ribosome in the order IF-2 and IF-3, IF-1 and N-formylmethionyl-tRNA(fMet); mRNA recruitment can occur at any time during PIC assembly.

Its subcellular location is the cytoplasm. In terms of biological role, one of the essential components for the initiation of protein synthesis. Stabilizes the binding of IF-2 and IF-3 on the 30S subunit to which N-formylmethionyl-tRNA(fMet) subsequently binds. Helps modulate mRNA selection, yielding the 30S pre-initiation complex (PIC). Upon addition of the 50S ribosomal subunit IF-1, IF-2 and IF-3 are released leaving the mature 70S translation initiation complex. The chain is Translation initiation factor IF-1 from Psychrobacter sp. (strain PRwf-1).